The primary structure comprises 866 residues: Probable beta-glucosidase F (866 aa).

An N-terminal signal peptide occupies residues 1 to 20 (MAAFPAYLALLSYLVPGALS). N-linked (GlcNAc...) asparagine glycans are attached at residues Asn-65, Asn-73, and Asn-257. Asp-285 is an active-site residue. 8 N-linked (GlcNAc...) asparagine glycosylation sites follow: Asn-328, Asn-360, Asn-395, Asn-421, Asn-474, Asn-659, Asn-664, and Asn-724. The interval 725 to 748 (SSKTYPYPDGYTTEPKPAPRAGGA) is disordered.

The protein belongs to the glycosyl hydrolase 3 family.

The protein localises to the secreted. It carries out the reaction Hydrolysis of terminal, non-reducing beta-D-glucosyl residues with release of beta-D-glucose.. The protein operates within glycan metabolism; cellulose degradation. Beta-glucosidases are one of a number of cellulolytic enzymes involved in the degradation of cellulosic biomass. Catalyzes the last step releasing glucose from the inhibitory cellobiose. The chain is Probable beta-glucosidase F (bglF) from Aspergillus oryzae (strain ATCC 42149 / RIB 40) (Yellow koji mold).